Consider the following 194-residue polypeptide: Cysteine and glycine-rich protein 2 (194 aa).

The 52-residue stretch at 10-61 folds into the LIM zinc-binding 1 domain; it reads CGACGRTVYHAEEVQCDGRSFHRCCFLCMVCRKNLDSTTVAIHDAEVYCKSC. A Nuclear localization signal motif is present at residues 64–69; sequence KKYGPK. A disordered region spans residues 85–110; the sequence is GERLGIKPESSPSPHRPTTNPNTSKF. Residues 94–110 show a composition bias toward polar residues; the sequence is SSPSPHRPTTNPNTSKF. The region spanning 120 to 171 is the LIM zinc-binding 2 domain; sequence CSRCGDSVYAAEKVIGAGKPWHKNCFRCAKCGKSLESTTLTEKEGEIYCKGC.

The protein resides in the nucleus. Interacts with zyxin. May be a component of a signal transduction pathway that mediates adhesion-stimulated changes in gene expression. Totally down-regulated in transformed cells. The sequence is that of Cysteine and glycine-rich protein 2 (CSRP2) from Coturnix japonica (Japanese quail).